A 298-amino-acid polypeptide reads, in one-letter code: MLSFSDILLKLQEFWKNQGCLIVQPYDIPAGAGTFHPATLLRSLDSKPWNVAYVAPSRRPTDGRYGENPNRLGSYYQFQVLIKPSPDNIQELYLRSLEALGLDLKSHDVRFVEDNWESPTLGAWGLGWEVWLDGMEVTQFTYFQQVGGIPCRPVAVEITYGVERLAMYIQSVENIFDILWNDSSNSAPMLYADVHLQSEYEFSKYHFELADTQMIFSLFNQYTQEVKHCLQQKVPLVAYDYTMLASHFFNILDARKAISVAQRQNYILQIRELAKGCATLYKEMEEERTMRREKNKGL.

It belongs to the class-II aminoacyl-tRNA synthetase family. As to quaternary structure, tetramer of two alpha and two beta subunits.

The protein resides in the cytoplasm. The catalysed reaction is tRNA(Gly) + glycine + ATP = glycyl-tRNA(Gly) + AMP + diphosphate. The protein is Glycine--tRNA ligase alpha subunit of Helicobacter hepaticus (strain ATCC 51449 / 3B1).